A 411-amino-acid polypeptide reads, in one-letter code: Citrate synthase (411 aa).

Active-site residues include histidine 304 and aspartate 363.

The protein belongs to the citrate synthase family.

It catalyses the reaction oxaloacetate + acetyl-CoA + H2O = citrate + CoA + H(+). It participates in carbohydrate metabolism; tricarboxylic acid cycle; isocitrate from oxaloacetate: step 1/2. The protein is Citrate synthase (gltA) of Rickettsia canadensis.